Consider the following 41-residue polypeptide: QTCASRCPRPCNAGLCCSIYGYCGSGAAYCGAGNCRCQCRG.

Pyrrolidone carboxylic acid is present on Q1. 5 disulfide bridges follow: C3-C17, C7-C37, C11-C23, C16-C30, and C35-C39. Residues 4 to 41 (ASRCPRPCNAGLCCSIYGYCGSGAAYCGAGNCRCQCRG) enclose the Chitin-binding type-1 domain.

Monomer.

In terms of biological role, has antifungal activity against P.infestans, A.lycopersici, V.dahliae, G.zeae, A.nicotianae, F.moniliforme, F.oxysporum and C.gossypii. The chain is Antifungal peptide 2 from Eucommia ulmoides (Hardy rubber tree).